Reading from the N-terminus, the 100-residue chain is uncharacterized protein (100 aa).

The segment at G40 to G100 is disordered.

This is an uncharacterized protein from Mycobacterium tuberculosis (strain ATCC 25618 / H37Rv).